The primary structure comprises 213 residues: Imidazole glycerol phosphate synthase subunit HisH (213 aa).

One can recognise a Glutamine amidotransferase type-1 domain in the interval 4 to 211 (NIGLIDYGMG…LAWLKKETKD (208 aa)). C82 serves as the catalytic Nucleophile. Residues H186 and E188 contribute to the active site.

As to quaternary structure, heterodimer of HisH and HisF.

The protein localises to the cytoplasm. It catalyses the reaction 5-[(5-phospho-1-deoxy-D-ribulos-1-ylimino)methylamino]-1-(5-phospho-beta-D-ribosyl)imidazole-4-carboxamide + L-glutamine = D-erythro-1-(imidazol-4-yl)glycerol 3-phosphate + 5-amino-1-(5-phospho-beta-D-ribosyl)imidazole-4-carboxamide + L-glutamate + H(+). The catalysed reaction is L-glutamine + H2O = L-glutamate + NH4(+). It participates in amino-acid biosynthesis; L-histidine biosynthesis; L-histidine from 5-phospho-alpha-D-ribose 1-diphosphate: step 5/9. Functionally, IGPS catalyzes the conversion of PRFAR and glutamine to IGP, AICAR and glutamate. The HisH subunit catalyzes the hydrolysis of glutamine to glutamate and ammonia as part of the synthesis of IGP and AICAR. The resulting ammonia molecule is channeled to the active site of HisF. The protein is Imidazole glycerol phosphate synthase subunit HisH of Prochlorococcus marinus (strain SARG / CCMP1375 / SS120).